Reading from the N-terminus, the 155-residue chain is Protein SprT-like (155 aa).

The region spanning Q7–T145 is the SprT-like domain. A Zn(2+)-binding site is contributed by H67. The active site involves E68. Position 71 (H71) interacts with Zn(2+).

The protein belongs to the SprT family. It depends on Zn(2+) as a cofactor.

The protein resides in the cytoplasm. The sequence is that of Protein SprT-like from Listeria monocytogenes serotype 4b (strain CLIP80459).